Here is a 358-residue protein sequence, read N- to C-terminus: Ion-translocating oxidoreductase complex subunit D (358 aa).

A run of 4 helical transmembrane segments spans residues 19-39, 41-61, 79-99, and 125-145; these read IMLWVILAMMPAFFTQIYYFG, GVVLQSALAIGTAIIAEFIAI, LTALILAMAIPPYAPYWVIII, and IGYVILLISFPLQMTTWMPPI. Position 186 is an FMN phosphoryl threonine (Thr-186). A run of 5 helical transmembrane segments spans residues 220 to 240, 248 to 268, 271 to 291, 297 to 317, and 321 to 341; these read FAQGWWQINVAFLAGGIFLIL, IPVAMLVTFFCLATATAFTGF, LSAISQLVSGAMMFGAFFIAT, SITPRGKIIFGALVGLFVYLI, and GNYPDGVAFAILLSNICVPLI.

This sequence belongs to the NqrB/RnfD family. In terms of assembly, the complex is composed of six subunits: RnfA, RnfB, RnfC, RnfD, RnfE and RnfG. It depends on FMN as a cofactor.

It is found in the cell inner membrane. Part of a membrane-bound complex that couples electron transfer with translocation of ions across the membrane. This is Ion-translocating oxidoreductase complex subunit D from Haemophilus influenzae (strain PittGG).